The chain runs to 474 residues: Kynureninase 2 (474 aa).

Pyridoxal 5'-phosphate is bound by residues Leu-144, Thr-145, 172–175, Asp-258, His-261, and Tyr-283; that span reads FPSD. Lys-284 carries the N6-(pyridoxal phosphate)lysine modification. Trp-323 and Thr-351 together coordinate pyridoxal 5'-phosphate.

Belongs to the kynureninase family. In terms of assembly, homodimer. Requires pyridoxal 5'-phosphate as cofactor.

It is found in the cytoplasm. It carries out the reaction L-kynurenine + H2O = anthranilate + L-alanine + H(+). It catalyses the reaction 3-hydroxy-L-kynurenine + H2O = 3-hydroxyanthranilate + L-alanine + H(+). It functions in the pathway amino-acid degradation; L-kynurenine degradation; L-alanine and anthranilate from L-kynurenine: step 1/1. It participates in cofactor biosynthesis; NAD(+) biosynthesis; quinolinate from L-kynurenine: step 2/3. Its function is as follows. Catalyzes the cleavage of L-kynurenine (L-Kyn) and L-3-hydroxykynurenine (L-3OHKyn) into anthranilic acid (AA) and 3-hydroxyanthranilic acid (3-OHAA), respectively. In Emericella nidulans (strain FGSC A4 / ATCC 38163 / CBS 112.46 / NRRL 194 / M139) (Aspergillus nidulans), this protein is Kynureninase 2 (bna5-2).